Consider the following 245-residue polypeptide: Thiopurine S-methyltransferase (245 aa).

At Ser-14 the chain carries Phosphoserine. Trp-29–Phe-40 contributes to the S-adenosyl-L-methionine binding site. Residue Phe-40 participates in substrate binding. The residue at position 58 (Lys-58) is an N6-acetyllysine. S-adenosyl-L-methionine-binding residues include Leu-69, Glu-90, and Arg-152.

It belongs to the class I-like SAM-binding methyltransferase superfamily. TPMT family. In terms of assembly, monomer.

Its subcellular location is the cytoplasm. It carries out the reaction S-adenosyl-L-methionine + a thiopurine = S-adenosyl-L-homocysteine + a thiopurine S-methylether.. The chain is Thiopurine S-methyltransferase (TPMT) from Panthera tigris (Tiger).